Here is a 303-residue protein sequence, read N- to C-terminus: sn-1-specific diacylglycerol lipase ABHD11 (303 aa).

Residues 1 to 22 constitute a mitochondrion transit peptide; the sequence is MLRWTRAWTAPYRGIGLSNSSF. The 236-residue stretch at 55–290 folds into the AB hydrolase-1 domain; that stretch reads PALVFLHGLF…NAGHWVHSDR (236 aa). Lys-75 is modified (N6-succinyllysine). Active-site charge relay system residues include Ser-129, Asp-225, and His-284.

It belongs to the AB hydrolase superfamily. Interacts with OGDH and DLST; this interaction maintains the functional lipoylation of the 2-oxoglutarate dehydrogenase complex. Phosphorylated.

The protein localises to the mitochondrion. It is found in the mitochondrion matrix. It carries out the reaction a 1,3-diacyl-sn-glycerol + H2O = a 1-acyl-sn-glycerol + a fatty acid + H(+). The enzyme catalyses 1-octadecanoyl-2-(9Z-octadecenoyl)-sn-glycerol + H2O = 2-(9Z-octadecenoyl)-glycerol + octadecanoate + H(+). The catalysed reaction is 1-octadecanoyl-2-(4Z,7Z,10Z,13Z,16Z,19Z-docosahexaenoyl)-sn-glycerol + H2O = 2-(4Z,7Z,10Z,13Z,16Z,19Z-docosahexaenoyl)-glycerol + octadecanoate + H(+). It catalyses the reaction a 1,2-diacyl-sn-glycerol + H2O = a 2-acylglycerol + a fatty acid + H(+). It carries out the reaction 1,2-didecanoylglycerol + H2O = decanoylglycerol + decanoate + H(+). The enzyme catalyses 1-octadecanoyl-2-(5Z,8Z,11Z,14Z-eicosatetraenoyl)-sn-glycerol + H2O = 2-(5Z,8Z,11Z,14Z-eicosatetraenoyl)-glycerol + octadecanoate + H(+). With respect to regulation, the diacylglycerol lipase activity can be modulated by phosphorylation by cAMP-dependent protein kinase. In terms of biological role, catalyzes the hydrolysis of diacylglycerol in vitro and may function as a key regulator in lipid metabolism, namely by regulating the intracellular levels of diacylglycerol. 1,2-diacyl-sn-glycerols are the preferred substrate over 1,3-diacyl-sn-glycerols. The enzyme hydrolyzes stearate in preference to palmitate from the sn-1 position of 1,2-diacyl-sn-glycerols. Maintains the functional lipoylation of the 2-oxoglutarate dehydrogenase complex (OGDHc) through its interaction with the OGDHc by preventing the formation of lipoyl adducts. In addition, is also required for the expansion and differentiation of embryonic stem cells (ESCs). In Bos taurus (Bovine), this protein is sn-1-specific diacylglycerol lipase ABHD11.